We begin with the raw amino-acid sequence, 187 residues long: Photosystem I assembly protein Ycf4 (187 aa).

2 consecutive transmembrane segments (helical) span residues 25 to 45 (YLWA…GISS) and 69 to 89 (MSFY…TVIW).

This sequence belongs to the Ycf4 family.

Its subcellular location is the cellular thylakoid membrane. In terms of biological role, seems to be required for the assembly of the photosystem I complex. This is Photosystem I assembly protein Ycf4 from Trichodesmium erythraeum (strain IMS101).